Consider the following 697-residue polypeptide: Potassium-transporting ATPase ATP-binding subunit (697 aa).

4 helical membrane passes run 55-75 (PIMF…FLPS), 82-102 (GWFN…ANFA), 245-265 (LTLI…YLGF), and 271-291 (VLVA…LSAI). The active-site 4-aspartylphosphate intermediate is Asp-324. Residues Asp-361, Glu-365, 393-400 (FKAETRMS), and Lys-412 each bind ATP. 2 residues coordinate Mg(2+): Asp-535 and Asp-539. 3 consecutive transmembrane segments (helical) span residues 605–625 (FAII…LNIM), 633–653 (AILS…PLAM), and 677–697 (GGVI…GLFI).

It belongs to the cation transport ATPase (P-type) (TC 3.A.3) family. Type IA subfamily. In terms of assembly, the system is composed of three essential subunits: KdpA, KdpB and KdpC.

It is found in the cell membrane. It carries out the reaction K(+)(out) + ATP + H2O = K(+)(in) + ADP + phosphate + H(+). Its function is as follows. Part of the high-affinity ATP-driven potassium transport (or Kdp) system, which catalyzes the hydrolysis of ATP coupled with the electrogenic transport of potassium into the cytoplasm. This subunit is responsible for energy coupling to the transport system and for the release of the potassium ions to the cytoplasm. In Bacillus mycoides (strain KBAB4) (Bacillus weihenstephanensis), this protein is Potassium-transporting ATPase ATP-binding subunit.